The chain runs to 204 residues: MKAEFKRKGGGKVKLVVGMTGATGAIFGVRLLQWLKAAGVETHLVVSPWANVTIKHETGYTLQEVEQLATYTYSHKDQAAAISSGSFDTDGMIVAPCSMKSLASIRTGMADNLLTRAADVMLKERKKLVLLTRETPLNQIHLENMLALTKMGTIILPPMPAFYNRPRSLEEMVDHIVFRTLDQFGIRLPEAKRWNGIEKQKGGA.

FMN is bound by residues 21 to 23, Ser47, 98 to 101, and Arg133; these read GAT and SMKS.

This sequence belongs to the UbiX/PAD1 family. YclB subfamily. In terms of assembly, homododecamer.

It carries out the reaction dimethylallyl phosphate + FMNH2 = prenylated FMNH2 + phosphate. Functionally, involved in the non-oxidative decarboxylation and detoxification of phenolic derivatives under both aerobic and anaerobic conditions. Flavin prenyltransferase that catalyzes the synthesis of the prenylated FMN cofactor (prenyl-FMN) for phenolic acid decarboxylase. In Bacillus subtilis (strain 168), this protein is Probable UbiX-like flavin prenyltransferase.